Here is a 391-residue protein sequence, read N- to C-terminus: Alkanesulfonate monooxygenase (391 aa).

It belongs to the SsuD family.

The catalysed reaction is an alkanesulfonate + FMNH2 + O2 = an aldehyde + FMN + sulfite + H2O + 2 H(+). Functionally, catalyzes the desulfonation of aliphatic sulfonates. This chain is Alkanesulfonate monooxygenase, found in Rhodopseudomonas palustris (strain ATCC BAA-98 / CGA009).